We begin with the raw amino-acid sequence, 538 residues long: Chaperonin GroEL 1 (538 aa).

ATP is bound by residues 29–32 (TLGP), 86–90 (DGTTT), Gly413, and Asp494.

The protein belongs to the chaperonin (HSP60) family. In terms of assembly, forms a cylinder of 14 subunits composed of two heptameric rings stacked back-to-back. Interacts with the co-chaperonin GroES.

It is found in the cytoplasm. The catalysed reaction is ATP + H2O + a folded polypeptide = ADP + phosphate + an unfolded polypeptide.. Together with its co-chaperonin GroES, plays an essential role in assisting protein folding. The GroEL-GroES system forms a nano-cage that allows encapsulation of the non-native substrate proteins and provides a physical environment optimized to promote and accelerate protein folding. This chain is Chaperonin GroEL 1, found in Mycolicibacterium paratuberculosis (strain ATCC BAA-968 / K-10) (Mycobacterium paratuberculosis).